Consider the following 365-residue polypeptide: Peptide chain release factor 2 (365 aa).

Q252 is modified (N5-methylglutamine).

The protein belongs to the prokaryotic/mitochondrial release factor family. Methylated by PrmC. Methylation increases the termination efficiency of RF2.

It localises to the cytoplasm. Functionally, peptide chain release factor 2 directs the termination of translation in response to the peptide chain termination codons UGA and UAA. This chain is Peptide chain release factor 2, found in Shewanella baltica (strain OS223).